The primary structure comprises 382 residues: S-adenosylmethionine synthase (382 aa).

Glu-10 lines the Mg(2+) pocket. Residue His-16 coordinates ATP. Glu-44 is a K(+) binding site. Residues Glu-57 and Gln-100 each coordinate L-methionine. ATP contacts are provided by residues 166-168, 234-237, Asp-245, 251-252, Ala-268, Lys-272, and Lys-276; these read DTK, SGRF, and RK. An L-methionine-binding site is contributed by Asp-245. Residue Lys-276 participates in L-methionine binding.

It belongs to the AdoMet synthase family. The cofactor is Mg(2+). K(+) serves as cofactor.

It catalyses the reaction L-methionine + ATP + H2O = S-adenosyl-L-methionine + phosphate + diphosphate. The protein operates within amino-acid biosynthesis; S-adenosyl-L-methionine biosynthesis; S-adenosyl-L-methionine from L-methionine: step 1/1. In terms of biological role, catalyzes the formation of S-adenosylmethionine from methionine and ATP. The reaction comprises two steps that are both catalyzed by the same enzyme: formation of S-adenosylmethionine (AdoMet) and triphosphate, and subsequent hydrolysis of the triphosphate. The protein is S-adenosylmethionine synthase (sam1) of Schizosaccharomyces pombe (strain 972 / ATCC 24843) (Fission yeast).